Reading from the N-terminus, the 292-residue chain is Protease HtpX homolog (292 aa).

2 helical membrane-spanning segments follow: residues 7 to 27 and 29 to 49; these read TFIL…LIGG and GGAV…WWNS. H131 lines the Zn(2+) pocket. E132 is a catalytic residue. A Zn(2+)-binding site is contributed by H135. The next 2 helical transmembrane spans lie at 148–168 and 178–198; these read ATMA…SMFG and LAAI…QMAI. Residue E203 participates in Zn(2+) binding.

The protein belongs to the peptidase M48B family. Requires Zn(2+) as cofactor.

The protein resides in the cell inner membrane. In Paracoccus denitrificans (strain Pd 1222), this protein is Protease HtpX homolog.